Here is a 542-residue protein sequence, read N- to C-terminus: CTP synthase (542 aa).

An amidoligase domain region spans residues 1-265 (MTRYIFVTGG…DEIIVERFGL (265 aa)). Residue Ser-13 participates in CTP binding. Ser-13 contacts UTP. ATP is bound by residues 14 to 19 (SLGKGI) and Asp-71. The Mg(2+) site is built by Asp-71 and Glu-139. Residues 146–148 (DIE), 186–191 (KTKPTQ), and Lys-222 contribute to the CTP site. UTP contacts are provided by residues 186–191 (KTKPTQ) and Lys-222. Positions 290–541 (TIAMVGKYME…VRAALENAGG (252 aa)) constitute a Glutamine amidotransferase type-1 domain. Gly-351 contributes to the L-glutamine binding site. Residue Cys-378 is the Nucleophile; for glutamine hydrolysis of the active site. L-glutamine is bound by residues 379–382 (LGLQ), Glu-402, and Arg-469. Catalysis depends on residues His-514 and Glu-516.

It belongs to the CTP synthase family. Homotetramer.

The catalysed reaction is UTP + L-glutamine + ATP + H2O = CTP + L-glutamate + ADP + phosphate + 2 H(+). The enzyme catalyses L-glutamine + H2O = L-glutamate + NH4(+). It catalyses the reaction UTP + NH4(+) + ATP = CTP + ADP + phosphate + 2 H(+). It functions in the pathway pyrimidine metabolism; CTP biosynthesis via de novo pathway; CTP from UDP: step 2/2. With respect to regulation, allosterically activated by GTP, when glutamine is the substrate; GTP has no effect on the reaction when ammonia is the substrate. The allosteric effector GTP functions by stabilizing the protein conformation that binds the tetrahedral intermediate(s) formed during glutamine hydrolysis. Inhibited by the product CTP, via allosteric rather than competitive inhibition. In terms of biological role, catalyzes the ATP-dependent amination of UTP to CTP with either L-glutamine or ammonia as the source of nitrogen. Regulates intracellular CTP levels through interactions with the four ribonucleotide triphosphates. The protein is CTP synthase of Hahella chejuensis (strain KCTC 2396).